The chain runs to 206 residues: Urease accessory protein UreG (206 aa).

Residue 14-21 participates in GTP binding; it reads GPVGSGKT.

It belongs to the SIMIBI class G3E GTPase family. UreG subfamily. As to quaternary structure, homodimer. UreD, UreF and UreG form a complex that acts as a GTP-hydrolysis-dependent molecular chaperone, activating the urease apoprotein by helping to assemble the nickel containing metallocenter of UreC. The UreE protein probably delivers the nickel.

It is found in the cytoplasm. Its function is as follows. Facilitates the functional incorporation of the urease nickel metallocenter. This process requires GTP hydrolysis, probably effectuated by UreG. This Methylocella silvestris (strain DSM 15510 / CIP 108128 / LMG 27833 / NCIMB 13906 / BL2) protein is Urease accessory protein UreG.